We begin with the raw amino-acid sequence, 274 residues long: Large ribosomal subunit protein uL2 (274 aa).

The interval 223 to 274 is disordered; sequence VAMNPVDHPHGGGEGKTSGGRHPVSPWGVPTKGYKTRSNKRTDKFIVRRRAK.

The protein belongs to the universal ribosomal protein uL2 family. In terms of assembly, part of the 50S ribosomal subunit. Forms a bridge to the 30S subunit in the 70S ribosome.

In terms of biological role, one of the primary rRNA binding proteins. Required for association of the 30S and 50S subunits to form the 70S ribosome, for tRNA binding and peptide bond formation. It has been suggested to have peptidyltransferase activity; this is somewhat controversial. Makes several contacts with the 16S rRNA in the 70S ribosome. The protein is Large ribosomal subunit protein uL2 of Colwellia psychrerythraea (strain 34H / ATCC BAA-681) (Vibrio psychroerythus).